The primary structure comprises 157 residues: Phosphopantetheine adenylyltransferase (157 aa).

Thr8 is a substrate binding site. ATP-binding positions include 8–9 (TF) and His16. Substrate-binding residues include Lys40, Thr72, and Arg86. Residues 87–89 (GLR), Glu97, and 122–128 (YSFLSSS) each bind ATP.

It belongs to the bacterial CoaD family. As to quaternary structure, homohexamer. Mg(2+) serves as cofactor.

It localises to the cytoplasm. It carries out the reaction (R)-4'-phosphopantetheine + ATP + H(+) = 3'-dephospho-CoA + diphosphate. The protein operates within cofactor biosynthesis; coenzyme A biosynthesis; CoA from (R)-pantothenate: step 4/5. Reversibly transfers an adenylyl group from ATP to 4'-phosphopantetheine, yielding dephospho-CoA (dPCoA) and pyrophosphate. In Prochlorococcus marinus (strain MIT 9215), this protein is Phosphopantetheine adenylyltransferase.